The chain runs to 524 residues: MADEFGNGDALDLPVGKDAVNSLIRENSHIFSDTQCKVCSAVLISESQKLAHYQSRKHANKVRRYMAINQGEDSVPAKKFKAAPAEISDGEDRSKCCPVCNMTFSSPVVAESHYIGKTHIKNLRLREQGGVKEGMVNQAKKTRTPTVATKSDNKMDHSDRAKFCKLCHSTFNNPLMAEQHYAGKKHKKQETKTQIMTIYTSSGQTPAQAPIPLNLNSPMPGSGSAGKGFSCDKCNIVLNSIEQYQAHVSGAKHKNQLMSMTPLSEEGHQAVVAPSAIASGSAGKGFSCDTCNIVLNSIEQYQAHISGAKHKNHLKSMTPLSEEGHTAAVAPSAFASGSAGKGFSCDTCNIVLNSIEQYQAHISGAKHKNHLMSMTPLSEEGHTAAVAPSAFASGSAGKGFSCDTCNIVLNSIEQYQAHVSGAKHKNQLMSMTPSSEEGLPSAVGPSAFASPLSAGGALSSGGPSGRGFCPSGDLTPKGPSSFGSLPPLGSLLPPLYPPAHSSQPYVHDDTMSPDGYNYFNEDFE.

7 consecutive Matrin-type zinc fingers follow at residues Thr-34–Arg-64, Asp-92–Arg-126, Lys-162–Lys-192, Gly-226–Met-260, Phe-286–Ser-316, Phe-343–Ser-373, and Phe-400–Ser-430. Zn(2+) is bound by residues Cys-36, Cys-39, His-52, His-58, Cys-97, Cys-100, His-113, and His-119. Disordered stretches follow at residues Ser-453–Pro-486 and Pro-494–Pro-513. Residues Pro-476–Pro-486 show a composition bias toward low complexity.

It is found in the nucleus. It localises to the cytoplasm. Functionally, binds preferentially to dsRNA, but also to RNA-DNA hybrids. The polypeptide is Zinc finger protein 346 (Xenopus laevis (African clawed frog)).